The chain runs to 429 residues: Phosphoribosylamine--glycine ligase (429 aa).

The ATP-grasp domain occupies 109-316 (KDFLARHQIP…LVELCLAAID (208 aa)). Position 135-196 (135-196 (VREQGAPIVV…EEFLDGEEAS (62 aa))) interacts with ATP. The tract at residues 212–234 (SQDHKRVGDKDTGPNTGGMGAYS) is disordered. A compositionally biased stretch (basic and acidic residues) spans 213–223 (QDHKRVGDKDT). The Mg(2+) site is built by Glu-286 and Asn-288.

This sequence belongs to the GARS family. Mg(2+) serves as cofactor. The cofactor is Mn(2+).

The enzyme catalyses 5-phospho-beta-D-ribosylamine + glycine + ATP = N(1)-(5-phospho-beta-D-ribosyl)glycinamide + ADP + phosphate + H(+). The protein operates within purine metabolism; IMP biosynthesis via de novo pathway; N(1)-(5-phospho-D-ribosyl)glycinamide from 5-phospho-alpha-D-ribose 1-diphosphate: step 2/2. The chain is Phosphoribosylamine--glycine ligase from Vibrio vulnificus (strain YJ016).